The sequence spans 273 residues: Dermonecrotic toxin LhSicTox-alphaIA2bii (273 aa).

Residue H5 is part of the active site. Positions 25 and 27 each coordinate Mg(2+). H41 (nucleophile) is an active-site residue. Intrachain disulfides connect C45–C51 and C47–C190. D85 is a Mg(2+) binding site.

This sequence belongs to the arthropod phospholipase D family. Class II subfamily. Mg(2+) serves as cofactor. Expressed by the venom gland.

Its subcellular location is the secreted. It catalyses the reaction an N-(acyl)-sphingosylphosphocholine = an N-(acyl)-sphingosyl-1,3-cyclic phosphate + choline. The catalysed reaction is an N-(acyl)-sphingosylphosphoethanolamine = an N-(acyl)-sphingosyl-1,3-cyclic phosphate + ethanolamine. It carries out the reaction a 1-acyl-sn-glycero-3-phosphocholine = a 1-acyl-sn-glycero-2,3-cyclic phosphate + choline. The enzyme catalyses a 1-acyl-sn-glycero-3-phosphoethanolamine = a 1-acyl-sn-glycero-2,3-cyclic phosphate + ethanolamine. In terms of biological role, dermonecrotic toxins cleave the phosphodiester linkage between the phosphate and headgroup of certain phospholipids (sphingolipid and lysolipid substrates), forming an alcohol (often choline) and a cyclic phosphate. This toxin acts on sphingomyelin (SM). It may also act on ceramide phosphoethanolamine (CPE), lysophosphatidylcholine (LPC) and lysophosphatidylethanolamine (LPE), but not on lysophosphatidylserine (LPS), and lysophosphatidylglycerol (LPG). It acts by transphosphatidylation, releasing exclusively cyclic phosphate products as second products. Induces dermonecrosis, hemolysis, increased vascular permeability, edema, inflammatory response, and platelet aggregation. This chain is Dermonecrotic toxin LhSicTox-alphaIA2bii, found in Loxosceles hirsuta (Recluse spider).